A 429-amino-acid chain; its full sequence is MALVTLGINHRTAPVEIRERVAFTPERMAEAFSELRAASGASEAAILSTCNRTELYLAGDDDCAPSVLRWLAGFHELDVADLENVLYVHRDSDAVRHMMRVAAGLDSMVLGEPQILGQLKDAYALAREHSATGSFLSRLFEQTFSVAKRVRTQTAIGENPVSVAYASVSMAHHIFADMSRNKALLIGAGKTIELVARHLAEAGVRSFLVANRTLEKAQALAEAHGGKGILLSEIPDHLSDVDIVISSTASPLPILGKGAVERALKKRKHRPYFMVDIAVPRDIEPEVASLADVYLYTVDDLRQVIEENIRSREGAAREAENLISSGVQDFLDQLRALDAVSTLKVFRQRAELLRDVETEKALRALRNGTDPETALRSLARGLTNKLLHQPSVQVRKAMAEGRTEVTECLRELYQLDALEADEPTTTEKL.

Residues 49 to 52 (TCNR), Ser-107, 112 to 114 (EPQ), and Gln-118 each bind substrate. The active-site Nucleophile is Cys-50. 187–192 (GAGKTI) serves as a coordination point for NADP(+).

It belongs to the glutamyl-tRNA reductase family. Homodimer.

It carries out the reaction (S)-4-amino-5-oxopentanoate + tRNA(Glu) + NADP(+) = L-glutamyl-tRNA(Glu) + NADPH + H(+). It participates in porphyrin-containing compound metabolism; protoporphyrin-IX biosynthesis; 5-aminolevulinate from L-glutamyl-tRNA(Glu): step 1/2. Its function is as follows. Catalyzes the NADPH-dependent reduction of glutamyl-tRNA(Glu) to glutamate 1-semialdehyde (GSA). The polypeptide is Glutamyl-tRNA reductase (Marinobacter nauticus (strain ATCC 700491 / DSM 11845 / VT8) (Marinobacter aquaeolei)).